The sequence spans 213 residues: Cytochrome c biogenesis ATP-binding export protein CcmA (213 aa).

Residues 7 to 213 (LKTKKLACQR…VRLENYKFTE (207 aa)) form the ABC transporter domain. 39 to 46 (GHNGIGKT) contacts ATP.

The protein belongs to the ABC transporter superfamily. CcmA exporter (TC 3.A.1.107) family. In terms of assembly, the complex is composed of two ATP-binding proteins (CcmA) and two transmembrane proteins (CcmB).

The protein localises to the cell inner membrane. It carries out the reaction heme b(in) + ATP + H2O = heme b(out) + ADP + phosphate + H(+). In terms of biological role, part of the ABC transporter complex CcmAB involved in the biogenesis of c-type cytochromes; once thought to export heme, this seems not to be the case, but its exact role is uncertain. Responsible for energy coupling to the transport system. This Pasteurella multocida (strain Pm70) protein is Cytochrome c biogenesis ATP-binding export protein CcmA.